Here is a 566-residue protein sequence, read N- to C-terminus: Putative ABC transporter ATP-binding protein BC_2655 (566 aa).

2 ABC transporter domains span residues Ile5 to Glu246 and Leu300 to Arg533. Residues Gly39 to Ser46 and Gly333 to Ser340 contribute to the ATP site.

This sequence belongs to the ABC transporter superfamily.

Its subcellular location is the cell membrane. Its function is as follows. Probably part of an ABC transporter complex. Responsible for energy coupling to the transport system. The protein is Putative ABC transporter ATP-binding protein BC_2655 of Bacillus cereus (strain ATCC 14579 / DSM 31 / CCUG 7414 / JCM 2152 / NBRC 15305 / NCIMB 9373 / NCTC 2599 / NRRL B-3711).